The chain runs to 435 residues: MSLPVVALVGRPNVGKSTIFNRIINSRVAIVEDKAGVTRDRIYARAEWMGHEFILIDTGGITLDSGEIEEQIKAQAEIAIDEADVIVMLGDVTQHMTNMDETIAKMLYRTKKPVILAINKADNPEQRTDIYDFYSLGLGDPIPVSGSHGTGMGDLLDAIVGEFGDKANQHEDGSIRFSVIGRPNVGKSSLVNAILGEQRVIVSNIEGTTRDAIDTTFTNDGQKYTIVDTAGIRRRGKVYEKTEKYSVLRAISAIEESDITLLVLDASTGIREQDKHVAGYAHDAGRGVIIVVNKWDLPKKDSRSMKDFEDTIRREFQYLDYAPIIFVSAKTGQRVPDILKLVKEVHENQTRRIQSSVLNDLLLEATRITPTPLVNGKRLRIYYMTQVAVTPPTFVVFVNDPELLHFSYQRFLINQLRQNFDFVGTPIKILARKRK.

EngA-type G domains lie at 4–167 (PVVA…GDKA) and 175–350 (IRFS…ENQT). GTP contacts are provided by residues 10–17 (GRPNVGKS), 57–61 (DTGGI), 119–122 (NKAD), 181–188 (GRPNVGKS), 228–232 (DTAGI), and 293–296 (NKWD). In terms of domain architecture, KH-like spans 351–435 (RRIQSSVLND…PIKILARKRK (85 aa)).

The protein belongs to the TRAFAC class TrmE-Era-EngA-EngB-Septin-like GTPase superfamily. EngA (Der) GTPase family. As to quaternary structure, associates with the 50S ribosomal subunit.

Functionally, GTPase that plays an essential role in the late steps of ribosome biogenesis. The protein is GTPase Der of Lactobacillus johnsonii (strain CNCM I-12250 / La1 / NCC 533).